A 223-amino-acid chain; its full sequence is Deoxyribose-phosphate aldolase (223 aa).

Catalysis depends on Asp89, which acts as the Proton donor/acceptor. Lys152 serves as the catalytic Schiff-base intermediate with acetaldehyde. Catalysis depends on Lys181, which acts as the Proton donor/acceptor.

The protein belongs to the DeoC/FbaB aldolase family. DeoC type 1 subfamily.

The protein resides in the cytoplasm. It carries out the reaction 2-deoxy-D-ribose 5-phosphate = D-glyceraldehyde 3-phosphate + acetaldehyde. Its pathway is carbohydrate degradation; 2-deoxy-D-ribose 1-phosphate degradation; D-glyceraldehyde 3-phosphate and acetaldehyde from 2-deoxy-alpha-D-ribose 1-phosphate: step 2/2. Its function is as follows. Catalyzes a reversible aldol reaction between acetaldehyde and D-glyceraldehyde 3-phosphate to generate 2-deoxy-D-ribose 5-phosphate. The protein is Deoxyribose-phosphate aldolase of Bacillus subtilis (strain 168).